A 373-amino-acid chain; its full sequence is Citrate synthase (373 aa).

Residues His-262 and Asp-314 contribute to the active site.

This sequence belongs to the citrate synthase family. In terms of assembly, homohexamer.

It catalyses the reaction oxaloacetate + acetyl-CoA + H2O = citrate + CoA + H(+). It participates in carbohydrate metabolism; tricarboxylic acid cycle; isocitrate from oxaloacetate: step 1/2. This Heyndrickxia coagulans (Weizmannia coagulans) protein is Citrate synthase (ctsA).